A 601-amino-acid polypeptide reads, in one-letter code: UBA domain-containing protein 3 (601 aa).

Positions 7–129 (ETAIRELVQS…LFLDENHSTN (123 aa)) constitute an Arf-GAP domain. 2 disordered regions span residues 123–158 (DENH…KSRY) and 289–310 (EPNQ…SSMG). Residues 139–156 (TKSSSQSSPMASTSTSKS) show a composition bias toward low complexity. The UBA domain occupies 157–197 (RYADSLSTLHDMGFSDDSVNTHALEETNGDVTRAIEKIVQH).

The polypeptide is UBA domain-containing protein 3 (ucp3) (Schizosaccharomyces pombe (strain 972 / ATCC 24843) (Fission yeast)).